The primary structure comprises 372 residues: Alpha-parvin (372 aa).

The tract at residues 1–31 (MATSPQKSPLVPKSPTPKSPPSRKKDDSFLG) is disordered. Ala-2 is subject to N-acetylalanine. A phosphoserine mark is found at Ser-8, Ser-14, and Ser-19. Positions 21 to 25 (PSRKK) are interaction with ARHGAP31. Phosphoserine is present on residues Ser-28 and Ser-62. Calponin-homology (CH) domains are found at residues 95-202 (QELM…QYFR) and 262-369 (NVVK…TKYR). Residues 223–372 (GILQSRQIQE…NLFTKYRNVE (150 aa)) are required for interaction with TESK1 and ILK.

The protein belongs to the parvin family. In terms of assembly, component of the heterotrimeric IPP (ILK-PINCH-PARVIN) complex composed of ILK, LIMS1/PINCH and PARVA; the complex binds to F-actin via the C-terminal tail of LIMS1 and the N-terminal region of PARVA, promoting F-actin filament bundling. Interacts with TGFB1I1. Interacts with ARHGAP31. Interacts with the actin cytoskeleton. Interacts (via C-terminus) with TESK1 (via C-terminus); the interaction inhibits TESK1 kinase activity. Interacts with PXN/PAXILLIN (via LD motif 4).

The protein resides in the cell junction. Its subcellular location is the focal adhesion. It is found in the cell membrane. It localises to the cytoplasm. The protein localises to the cytoskeleton. The protein resides in the myofibril. Its subcellular location is the sarcomere. It is found in the z line. Plays a role in sarcomere organization and in smooth muscle cell contraction. Required for normal development of the embryonic cardiovascular system, and for normal septation of the heart outflow tract. Plays a role in sprouting angiogenesis and is required for normal adhesion of vascular smooth muscle cells to endothelial cells during blood vessel development. Plays a role in the reorganization of the actin cytoskeleton, formation of lamellipodia and ciliogenesis. Plays a role in the establishment of cell polarity, cell adhesion, cell spreading, and directed cell migration. Within the IPP (ILK-PINCH-PARVIN) complex, binds to F-actin, promoting F-actin bundling, a process required to generate force for actin cytoskeleton reorganization and subsequent dynamic cell adhesion events such as cell spreading and migration. The polypeptide is Alpha-parvin (Parva) (Mus musculus (Mouse)).